We begin with the raw amino-acid sequence, 103 residues long: Urease subunit beta (103 aa).

This sequence belongs to the urease beta subunit family. In terms of assembly, heterotrimer of UreA (gamma), UreB (beta) and UreC (alpha) subunits. Three heterotrimers associate to form the active enzyme.

It localises to the cytoplasm. It carries out the reaction urea + 2 H2O + H(+) = hydrogencarbonate + 2 NH4(+). The protein operates within nitrogen metabolism; urea degradation; CO(2) and NH(3) from urea (urease route): step 1/1. This is Urease subunit beta from Mycobacterium marinum (strain ATCC BAA-535 / M).